A 201-amino-acid chain; its full sequence is Recombination protein RecR (201 aa).

The C4-type zinc-finger motif lies at 60-75 (CSTCGNVDTADPCMIC). The region spanning 83–178 (GTIIVVEDVS…KVTRLAHGVP (96 aa)) is the Toprim domain.

Belongs to the RecR family.

May play a role in DNA repair. It seems to be involved in an RecBC-independent recombinational process of DNA repair. It may act with RecF and RecO. This is Recombination protein RecR from Mesorhizobium japonicum (strain LMG 29417 / CECT 9101 / MAFF 303099) (Mesorhizobium loti (strain MAFF 303099)).